A 251-amino-acid polypeptide reads, in one-letter code: Maleate isomerase (251 aa).

Substrate is bound by residues N14, 76–78 (CLV), Y133, and N163. C76 acts as the Nucleophile in catalysis. C76 bears the S-(2-succinyl)cysteine mark. The Proton donor role is filled by C194. A substrate-binding site is contributed by 195–196 (VQ).

The protein belongs to the maleate isomerase family. In terms of assembly, homodimer.

It carries out the reaction maleate = fumarate. Catalyzes cis-trans isomerization of the C2-C3 double bond in maleate to yield fumarate. Shows a strict specificity for maleate, with no activity detected toward structurally related substrates including citraconate, mesaconate, dimethylmaleate, and maleamide. This Nocardia farcinica (strain IFM 10152) protein is Maleate isomerase.